The sequence spans 583 residues: Laccase-14 (583 aa).

The first 30 residues, 1 to 30 (MAPSLGSGSTRILLIVSLLLCLRQQAVVDA), serve as a signal peptide directing secretion. 2 consecutive Plastocyanin-like domains span residues 38–158 (HVGN…PRPG) and 168–320 (AEHT…YDDD). N-linked (GlcNAc...) asparagine glycans are attached at residues N41 and N84. H88 and H90 together coordinate Cu cation. The N-linked (GlcNAc...) asparagine glycan is linked to N126. The Cu cation site is built by H137 and H139. N-linked (GlcNAc...) asparagine glycans are attached at residues N179, N251, N304, N338, N388, N400, N446, and N464. The Plastocyanin-like 3 domain maps to 426-567 (DFPDRPPVMF…AMAFDVQDGP (142 aa)). Residues H482, H485, H487, H546, C547, H548, and H552 each contribute to the Cu cation site.

The protein belongs to the multicopper oxidase family. Cu cation is required as a cofactor.

It is found in the secreted. Its subcellular location is the extracellular space. The protein resides in the apoplast. It catalyses the reaction 4 hydroquinone + O2 = 4 benzosemiquinone + 2 H2O. Its function is as follows. Lignin degradation and detoxification of lignin-derived products. This is Laccase-14 (LAC14) from Oryza sativa subsp. japonica (Rice).